We begin with the raw amino-acid sequence, 198 residues long: Putative transposase InsO for insertion sequence element IS911B (198 aa).

The Integrase catalytic domain occupies 105 to 198; it reads AVTEPNQVWC…YCGDTGSGRV (94 aa).

Its function is as follows. Involved in the transposition of the insertion sequence IS911B. This is Putative transposase InsO for insertion sequence element IS911B (insO2) from Escherichia coli (strain K12).